Consider the following 319-residue polypeptide: Taste receptor type 2 member 30 (319 aa).

A topological domain (extracellular) is located at residue M1. The helical transmembrane segment at 2–22 threads the bilayer; it reads ITFLPIIFSILIVVIFVIGNF. Residues 23-46 are Cytoplasmic-facing; that stretch reads ANGFIALVNSIEWVKRQKISFADQ. Residues 47–67 traverse the membrane as a helical segment; the sequence is ILIALAVSRVGLLWALLLHWY. Residues 68-86 are Extracellular-facing; sequence ATELNLAFYSVEVRITAYN. Residues 87–107 traverse the membrane as a helical segment; sequence VWAVTNHFSNWLATSLSMFYL. Topologically, residues 108-126 are cytoplasmic; it reads LKIANFSNLIFLRIKRRVK. Residues 127-147 traverse the membrane as a helical segment; sequence SVILVILLGPLLFLVCHLFVI. Residues 148-178 are Extracellular-facing; that stretch reads NMNEIVWTKEYEGNLTWKIKLRNAVFLSNMT. N-linked (GlcNAc...) asparagine glycans are attached at residues N161 and N176. Residues 179-199 traverse the membrane as a helical segment; it reads LTMLANFVPLTLTLISFLLLI. The Cytoplasmic segment spans residues 200-229; that stretch reads CSLCKHLKKMQLHGKGSQDPSTKVHIKALQ. A helical membrane pass occupies residues 230 to 250; that stretch reads TVTCFLLLCAIYFLSMIISVY. The Extracellular portion of the chain corresponds to 251–259; that stretch reads NFGRLEKKP. A helical transmembrane segment spans residues 260 to 280; it reads VFMFCQAITFSYPSTHAFILI. The Cytoplasmic segment spans residues 281-319; it reads WGNKKLKQIFLSVLWHVRYWVKDRSLRLHRFTRAALCKG.

It belongs to the G-protein coupled receptor T2R family.

It is found in the membrane. In terms of biological role, receptor that may play a role in the perception of bitterness and is gustducin-linked. May play a role in sensing the chemical composition of the gastrointestinal content. The activity of this receptor may stimulate alpha gustducin, mediate PLC-beta-2 activation and lead to the gating of TRPM5. In Pongo pygmaeus (Bornean orangutan), this protein is Taste receptor type 2 member 30 (TAS2R30).